Reading from the N-terminus, the 318-residue chain is NADH-ubiquinone oxidoreductase chain 1 (318 aa).

A run of 8 helical transmembrane segments spans residues 2–22, 69–89, 102–122, 146–166, 171–191, 231–251, 253–273, and 294–314; these read FMIN…FLTL, FMFT…WVPL, MLFI…SGWA, LAII…STLT, HLWL…STLA, IIMM…NPLL, EAHT…FLWV, and LPLT…LACI.

The protein belongs to the complex I subunit 1 family. As to quaternary structure, core subunit of respiratory chain NADH dehydrogenase (Complex I) which is composed of 45 different subunits.

Its subcellular location is the mitochondrion inner membrane. The catalysed reaction is a ubiquinone + NADH + 5 H(+)(in) = a ubiquinol + NAD(+) + 4 H(+)(out). Its function is as follows. Core subunit of the mitochondrial membrane respiratory chain NADH dehydrogenase (Complex I) which catalyzes electron transfer from NADH through the respiratory chain, using ubiquinone as an electron acceptor. Essential for the catalytic activity and assembly of complex I. In Dugong dugon (Dugong), this protein is NADH-ubiquinone oxidoreductase chain 1 (MT-ND1).